The primary structure comprises 177 residues: Ribosome maturation factor RimM (177 aa).

The region spanning 92–166 (EDTFYHADLM…RIVVVPDTNP (75 aa)) is the PRC barrel domain.

The protein belongs to the RimM family. Binds ribosomal protein uS19.

It localises to the cytoplasm. An accessory protein needed during the final step in the assembly of 30S ribosomal subunit, possibly for assembly of the head region. Essential for efficient processing of 16S rRNA. May be needed both before and after RbfA during the maturation of 16S rRNA. It has affinity for free ribosomal 30S subunits but not for 70S ribosomes. The protein is Ribosome maturation factor RimM of Azorhizobium caulinodans (strain ATCC 43989 / DSM 5975 / JCM 20966 / LMG 6465 / NBRC 14845 / NCIMB 13405 / ORS 571).